We begin with the raw amino-acid sequence, 405 residues long: Phosphoglycerate kinase (405 aa).

Residues aspartate 24–asparagine 26, arginine 40, histidine 63–arginine 66, arginine 122, and arginine 162 each bind substrate. Residues lysine 212, glutamate 331, and glycine 361–serine 364 contribute to the ATP site.

This sequence belongs to the phosphoglycerate kinase family. As to quaternary structure, monomer.

It localises to the cytoplasm. The enzyme catalyses (2R)-3-phosphoglycerate + ATP = (2R)-3-phospho-glyceroyl phosphate + ADP. The protein operates within carbohydrate degradation; glycolysis; pyruvate from D-glyceraldehyde 3-phosphate: step 2/5. The protein is Phosphoglycerate kinase of Corynebacterium glutamicum (strain R).